The sequence spans 490 residues: MDRTNIENFLSRLKDLRALVIGDLMLDEYLWGRTERISPEAPVQVVDVVREDLRLGGAGNVINNLVTLGCQVHVASVLGEGHDGLLLRRRLEEKQVGIEGLQFDAKRTTSRKTRILASGQQMMRFDRESRCPIDATQEAVLAEFVSNSADRFDVILVSDYLKGVLTEDLLQSVIAVGKQKGIPVVIDPKGNDYAKYRGATLLTPNRKETEVASGISIVDEESLRLAARTLMQRIDLETLMVTRSEEGISIFFRNGEEVHLPTQAREVYDVTGAGDTVLSLVGLGLAGGLPVSEAAALANIGAGIVVGKVGTSTVNVEELHEAMAHHALEYDSKIRLRESLRDVLEVERRRGKTVVFTNGCFDLLHVGHVKYLQKARRLGDLLVLGLNSDASIRRLKGPSRPLISEQERAHILAALSCIDYVVVFDEDTPLELIDTLRPDILVKGGDYTPETVVGKDLVESYGGRVELIDLVDGRSTTNIIERILDRYEQG.

Residues 1-330 (MDRTNIENFL…EAMAHHALEY (330 aa)) are ribokinase. Residue 205–208 (NRKE) coordinates ATP. Asp-275 is an active-site residue. The segment at 356-490 (FTNGCFDLLH…ERILDRYEQG (135 aa)) is cytidylyltransferase.

It in the N-terminal section; belongs to the carbohydrate kinase PfkB family. The protein in the C-terminal section; belongs to the cytidylyltransferase family. As to quaternary structure, homodimer.

It catalyses the reaction D-glycero-beta-D-manno-heptose 7-phosphate + ATP = D-glycero-beta-D-manno-heptose 1,7-bisphosphate + ADP + H(+). The enzyme catalyses D-glycero-beta-D-manno-heptose 1-phosphate + ATP + H(+) = ADP-D-glycero-beta-D-manno-heptose + diphosphate. The protein operates within nucleotide-sugar biosynthesis; ADP-L-glycero-beta-D-manno-heptose biosynthesis; ADP-L-glycero-beta-D-manno-heptose from D-glycero-beta-D-manno-heptose 7-phosphate: step 1/4. It functions in the pathway nucleotide-sugar biosynthesis; ADP-L-glycero-beta-D-manno-heptose biosynthesis; ADP-L-glycero-beta-D-manno-heptose from D-glycero-beta-D-manno-heptose 7-phosphate: step 3/4. Catalyzes the phosphorylation of D-glycero-D-manno-heptose 7-phosphate at the C-1 position to selectively form D-glycero-beta-D-manno-heptose-1,7-bisphosphate. In terms of biological role, catalyzes the ADP transfer from ATP to D-glycero-beta-D-manno-heptose 1-phosphate, yielding ADP-D-glycero-beta-D-manno-heptose. This Syntrophotalea carbinolica (strain DSM 2380 / NBRC 103641 / GraBd1) (Pelobacter carbinolicus) protein is Bifunctional protein HldE.